The sequence spans 213 residues: Cytochrome c biogenesis ATP-binding export protein CcmA (213 aa).

In terms of domain architecture, ABC transporter spans 11 to 213 (LTARNLECIR…TVTVHHLVLS (203 aa)). 43-50 (GPNGSGKT) is a binding site for ATP.

It belongs to the ABC transporter superfamily. CcmA exporter (TC 3.A.1.107) family. The complex is composed of two ATP-binding proteins (CcmA) and two transmembrane proteins (CcmB).

The protein resides in the cell inner membrane. The catalysed reaction is heme b(in) + ATP + H2O = heme b(out) + ADP + phosphate + H(+). Its function is as follows. Part of the ABC transporter complex CcmAB involved in the biogenesis of c-type cytochromes; once thought to export heme, this seems not to be the case, but its exact role is uncertain. Responsible for energy coupling to the transport system. The chain is Cytochrome c biogenesis ATP-binding export protein CcmA from Nitrosomonas europaea (strain ATCC 19718 / CIP 103999 / KCTC 2705 / NBRC 14298).